The primary structure comprises 339 residues: tRNA pseudouridine synthase D (339 aa).

Aspartate 80 (nucleophile) is an active-site residue. A TRUD domain is found at 155–311 (GFPNYFTEQR…AKGFSWAFEP (157 aa)).

The protein belongs to the pseudouridine synthase TruD family.

It catalyses the reaction uridine(13) in tRNA = pseudouridine(13) in tRNA. In terms of biological role, responsible for synthesis of pseudouridine from uracil-13 in transfer RNAs. This Haemophilus influenzae (strain 86-028NP) protein is tRNA pseudouridine synthase D.